The following is a 541-amino-acid chain: Chaperonin GroEL (541 aa).

ATP-binding positions include 29–32 (TIGP), 86–90 (DGTTT), Gly413, 478–480 (NAA), and Asp494.

It belongs to the chaperonin (HSP60) family. Forms a cylinder of 14 subunits composed of two heptameric rings stacked back-to-back. Interacts with the co-chaperonin GroES.

The protein resides in the cytoplasm. It carries out the reaction ATP + H2O + a folded polypeptide = ADP + phosphate + an unfolded polypeptide.. Functionally, together with its co-chaperonin GroES, plays an essential role in assisting protein folding. The GroEL-GroES system forms a nano-cage that allows encapsulation of the non-native substrate proteins and provides a physical environment optimized to promote and accelerate protein folding. The polypeptide is Chaperonin GroEL (Oenococcus oeni (strain ATCC BAA-331 / PSU-1)).